The following is a 429-amino-acid chain: MGPFCLGCSHRKCYSPIRNLISQETFKFHFKNLRYAIDRKDTFLCYEVTRKDCDSPVSLHHGVFKNKDNIHAEICFLYWFHDKVLKVLSPREEFKITWYMSWSPCFECAEQVLRFLATHHNLSLDIFSSRLYNIRDPENQQNLCRLVQEGAQVAAMDLYEFKKCWKKFVDNGGRRFRPWKKLLTNFRYQDSKLQEILRPCYIPVPSSSSSTLSNICLTKGLPETRFCVERRRVHLLSEEEFYSQFYNQRVKHLCYYHGVKPYLCYQLEQFNGQAPLKGCLLSEKGKQHAEILFLDKIRSMELSQVIITCYLTWSPCPNCAWQLAAFKRDRPDLILHIYTSRLYFHWKRPFQKGLCSLWQSGILVDVMDLPQFTDCWTNFVNPKRPFWPWKGLEIISRRTQRRLHRIKESWGLQDLVNDFGNLQLGPPMS.

2 CMP/dCMP-type deaminase domains span residues 38–154 and 238–357; these read DRKD…AQVA and EEEF…LCSL. His71 lines the Zn(2+) pocket. Glu73 serves as the catalytic Proton donor. Positions 105, 108, 288, 316, and 319 each coordinate Zn(2+).

The protein belongs to the cytidine and deoxycytidylate deaminase family. As to quaternary structure, homodimer. Zn(2+) is required as a cofactor.

Its subcellular location is the cytoplasm. The catalysed reaction is a 2'-deoxycytidine in single-stranded DNA + H2O + H(+) = a 2'-deoxyuridine in single-stranded DNA + NH4(+). DNA deaminase (cytidine deaminase) which acts as an inhibitor of retrovirus replication and retrotransposon mobility via deaminase-dependent and -independent mechanisms. Selectively targets single-stranded DNA and does not deaminate double-stranded DNA or single- or double-stranded RNA. The chain is DNA dC-&gt;dU-editing enzyme APOBEC3 (Apobec3) from Rattus norvegicus (Rat).